A 92-amino-acid polypeptide reads, in one-letter code: Acylphosphatase (92 aa).

The 86-residue stretch at 5–90 (TYRLVICGLV…GDFVGFQLRE (86 aa)) folds into the Acylphosphatase-like domain. Catalysis depends on residues Arg-20 and Asn-38.

It belongs to the acylphosphatase family.

It carries out the reaction an acyl phosphate + H2O = a carboxylate + phosphate + H(+). The sequence is that of Acylphosphatase (acyP) from Albidiferax ferrireducens (strain ATCC BAA-621 / DSM 15236 / T118) (Rhodoferax ferrireducens).